The chain runs to 445 residues: UDP-N-acetylmuramoylalanine--D-glutamate ligase (445 aa).

ATP is bound at residue 117–123; that stretch reads GSNGKTT.

It belongs to the MurCDEF family.

The protein localises to the cytoplasm. It catalyses the reaction UDP-N-acetyl-alpha-D-muramoyl-L-alanine + D-glutamate + ATP = UDP-N-acetyl-alpha-D-muramoyl-L-alanyl-D-glutamate + ADP + phosphate + H(+). Its pathway is cell wall biogenesis; peptidoglycan biosynthesis. Cell wall formation. Catalyzes the addition of glutamate to the nucleotide precursor UDP-N-acetylmuramoyl-L-alanine (UMA). The protein is UDP-N-acetylmuramoylalanine--D-glutamate ligase of Neisseria meningitidis serogroup A / serotype 4A (strain DSM 15465 / Z2491).